We begin with the raw amino-acid sequence, 160 residues long: Probable dihydroneopterin aldolase 3 (160 aa).

Substrate is bound by residues glutamate 59, phenylalanine 91, and 110–111 (YE). Catalysis depends on lysine 137, which acts as the Proton donor/acceptor.

This sequence belongs to the DHNA family. In terms of assembly, homooctamer. Forms a hollow cylinder assembled from two ring-shaped tetramers. In terms of tissue distribution, expressed at very low levels in siliques.

It catalyses the reaction 7,8-dihydroneopterin = 6-hydroxymethyl-7,8-dihydropterin + glycolaldehyde. Its pathway is cofactor biosynthesis; tetrahydrofolate biosynthesis; 2-amino-4-hydroxy-6-hydroxymethyl-7,8-dihydropteridine diphosphate from 7,8-dihydroneopterin triphosphate: step 3/4. Catalyzes the conversion of 7,8-dihydroneopterin into 6-hydroxymethyl-7,8-dihydropterin, a biosynthetic precursor of the vitamin tetrahydrofolate. Can use L-threo-dihydroneopterin and D-erythro-dihydroneopterin as substrates for the formation of 6-hydroxymethyldihydropterin, but it can also catalyze the epimerization of carbon 2' of dihydroneopterin and dihydromonapterin. This is Probable dihydroneopterin aldolase 3 from Arabidopsis thaliana (Mouse-ear cress).